An 874-amino-acid polypeptide reads, in one-letter code: Probable inorganic carbon transporter subunit DabA (874 aa).

Residues cysteine 398, aspartate 400, histidine 580, and cysteine 595 each coordinate Zn(2+).

It belongs to the inorganic carbon transporter (TC 9.A.2) DabA family. In terms of assembly, forms a complex with DabB. It depends on Zn(2+) as a cofactor.

The protein resides in the cell membrane. Its function is as follows. Part of an energy-coupled inorganic carbon pump. This chain is Probable inorganic carbon transporter subunit DabA, found in Bacillus cereus (strain Q1).